The primary structure comprises 299 residues: Probable lipid kinase YegS (299 aa).

Residues 2 to 133 (ADLPASLLIL…IDIAQVNKET (132 aa)) enclose the DAGKc domain. Residues threonine 40, 66-72 (GDGTINE), and threonine 95 each bind ATP. The Mg(2+) site is built by leucine 215, aspartate 218, and leucine 220. Glutamate 271 functions as the Proton acceptor in the catalytic mechanism.

It belongs to the diacylglycerol/lipid kinase family. YegS lipid kinase subfamily. It depends on Mg(2+) as a cofactor. Ca(2+) is required as a cofactor.

The protein resides in the cytoplasm. In terms of biological role, probably phosphorylates lipids; the in vivo substrate is unknown. This is Probable lipid kinase YegS from Escherichia fergusonii (strain ATCC 35469 / DSM 13698 / CCUG 18766 / IAM 14443 / JCM 21226 / LMG 7866 / NBRC 102419 / NCTC 12128 / CDC 0568-73).